The following is a 378-amino-acid chain: Mas-related G-protein coupled receptor MRG (378 aa).

Residues 1-77 (MVWGKICWFS…VGQQALPLNI (77 aa)) lie on the Extracellular side of the membrane. Asparagine 54 and asparagine 57 each carry an N-linked (GlcNAc...) asparagine glycan. Residues 78–101 (IAPKAVLVSLCGVLLNGTVFWLLC) form a helical membrane-spanning segment. At 102–109 (CGATNPYM) the chain is on the cytoplasmic side. Residues 110–136 (VYILHLVAADVIYLCCSAVGFLQVTLL) form a helical membrane-spanning segment. At 137–154 (TYHGVVFFIPDFLAILSP) the chain is on the extracellular side. The chain crosses the membrane as a helical span at residues 155 to 169 (FSFEVCLCLLVAIST). Residues 170–191 (ERCVCVLFPIWYRCHRPKYTSN) lie on the Cytoplasmic side of the membrane. A helical transmembrane segment spans residues 192–207 (VVCTLIWGLPFCINIV). Over 208–221 (KSLFLTYWKHVKAC) the chain is Extracellular. The chain crosses the membrane as a helical span at residues 222-248 (VIFLKLSGLFHAILSLVMCVSSLTLLI). Topologically, residues 249–264 (RFLCCSQQQKATRVYA) are cytoplasmic. The helical transmembrane segment at 265 to 286 (VVQISAPMFLLWALPLSVAPLI) threads the bilayer. Residues 287-297 (TDFKMFVTTSY) lie on the Extracellular side of the membrane. Residues 298-317 (LISLFLIINSSANPIIYFFV) form a helical membrane-spanning segment. At 318–378 (GSLRKKRLKE…PREHRVDVET (61 aa)) the chain is on the cytoplasmic side. The interval 344–378 (GRNKKAAGIDPMEQPHSTQHVENLLPREHRVDVET) is disordered. The segment covering 368-378 (LPREHRVDVET) has biased composition (basic and acidic residues).

It belongs to the G-protein coupled receptor 1 family. Mas subfamily.

It localises to the cell membrane. The protein is Mas-related G-protein coupled receptor MRG (MAS1L) of Homo sapiens (Human).